The following is a 358-amino-acid chain: WAT1-related protein At3g28080 (358 aa).

The next 10 helical transmembrane spans lie at 12–32, 42–62, 81–101, 105–125, 137–157, 187–207, 219–239, 245–265, 283–303, and 308–328; these read AVFLTAMLAGETSIVGLSTLF, IYPFLSYSYLLASLLLLPSLF, IGLLGFLGSMYVITGGIGIEY, TLASAIGNIVPALTFILAVIF, SVAKVMGTILSLIGAFVVIFY, WLIGGAILTIQGIFVSVSFIL, FTVSILYILCISIVTSMIGLV, PSIWIIHFDITLFTIVTTGII, LYLAIFKPLSILIAVVMGTIF, and LYLGCLIGGILITLGFYVVMW. One can recognise an EamA domain in the interval 27-155; the sequence is GLSTLFKVAT…LSLIGAFVVI (129 aa).

Belongs to the drug/metabolite transporter (DMT) superfamily. Plant drug/metabolite exporter (P-DME) (TC 2.A.7.4) family.

It localises to the membrane. This chain is WAT1-related protein At3g28080, found in Arabidopsis thaliana (Mouse-ear cress).